The following is a 456-amino-acid chain: RuvB-like 1 (456 aa).

The disordered stretch occupies residues 1-20; sequence MKIEEVKSTTKTQRIASHSH. 70–77 lines the ATP pocket; it reads GPPGTGKT.

It belongs to the RuvB family. Forms homohexameric rings. Can form a dodecamer with ruvbl2 made of two stacked hexameric rings. Is a component of the RNA polymerase II holoenzyme complex. Component of the chromatin-remodeling Ino80 complex. Component of some MLL1/MLL complex.

The protein resides in the nucleus. It localises to the dynein axonemal particle. It carries out the reaction ATP + H2O = ADP + phosphate + H(+). Functionally, has single-stranded DNA-stimulated ATPase and ATP-dependent DNA helicase (3' to 5') activity suggesting a role in nuclear processes such as recombination and transcription. Proposed core component of the chromatin remodeling Ino80 complex which exhibits DNA- and nucleosome-activated ATPase activity and catalyzes ATP-dependent nucleosome sliding. May act as a negative regulator of embryonic heart growth. In Danio rerio (Zebrafish), this protein is RuvB-like 1 (ruvbl1).